The primary structure comprises 74 residues: Imcroporin (74 aa).

Residues 1–22 (MKFQYLLAVFLIVLVVTDHCQA) form the signal peptide. Lysine amide; partial is present on Lys39. The propeptide occupies 45–74 (QLEARFEPKQRNFRKRELDFEKLFANMPDY).

The protein belongs to the non-disulfide-bridged peptide (NDBP) superfamily. Short antimicrobial peptide (group 4) family. In terms of tissue distribution, expressed by the venom gland.

The protein resides in the secreted. It is found in the target cell membrane. Has potent antibacterial activity against Gram-positive bacteria M.luteus, B.thuringiensis, S.aureus and B.subtilis, but not Gram-negative bacteria. Shows a weak cytotoxicity effect against mammalian cell lines and relatively low hemolytic activity against human erythrocytes. The polypeptide is Imcroporin (Isometrus maculatus (Lesser brown scorpion)).